Consider the following 114-residue polypeptide: Fluoride-specific ion channel FluC 1 (114 aa).

The next 4 helical transmembrane spans lie at 3–23 (IDIK…GALF), 30–50 (IFIV…LNIL), 55–75 (LTLC…MSHL), and 87–107 (FLLN…LGHI). Na(+) is bound by residues Gly63 and Thr66.

Belongs to the fluoride channel Fluc/FEX (TC 1.A.43) family.

It localises to the cell inner membrane. It catalyses the reaction fluoride(in) = fluoride(out). Na(+) is not transported, but it plays an essential structural role and its presence is essential for fluoride channel function. In terms of biological role, fluoride-specific ion channel. Important for reducing fluoride concentration in the cell, thus reducing its toxicity. In Prochlorococcus marinus (strain NATL2A), this protein is Fluoride-specific ion channel FluC 1.